The primary structure comprises 1082 residues: Transcription elongation factor SPT5 (1082 aa).

Acidic residues predominate over residues 1 to 28; the sequence is MSDSEDSNFSEEEDSERSSEAEEAEVEE. The disordered stretch occupies residues 1–88; it reads MSDSEDSNFS…DVDDEYEDED (88 aa). Phosphoserine is present on residues Ser32 and Ser36. 2 stretches are compositionally biased toward acidic residues: residues 38 to 62 and 76 to 88; these read KEEE…EDDD and DEAD…EDED. A Glycyl lysine isopeptide (Lys-Gly) (interchain with G-Cter in SUMO2) cross-link involves residue Lys141. The interval 174 to 268 is interaction with SUPT4H1 and SUPT4H2; that stretch reads DPNLWTVKCK…TDVLKVVKEV (95 aa). A KOW 1 domain is found at 271–304; sequence LKPKSWVRLKRGIYKDDIAQVDYVEPSQNTISLK. The segment at 311–418 is interaction with RNA polymerase II; it reads YDRIKARMSL…STGKEREHNF (108 aa). Positions 326 to 332 match the UBR5-degron motif; it reads KRKKFKR. 2 KOW domains span residues 418–449 and 470–501; these read FQPG…ITIM and FKMG…VILF. Residue Lys577 participates in RNA binding. The region spanning 592 to 625 is the KOW 4 domain; that stretch reads IHVKDIVKVIDGPHSGREGEIRHLYRSFAFLHCK. Residue Arg617 participates in DNA binding. Thr661 bears the Phosphothreonine mark. A phosphoserine mark is found at Ser664 and Ser684. Residues 669 to 694 form a disordered region; it reads SPMHPSAEGQHGGFGSPGGMSRGRGR. Residues 678–690 show a composition bias toward gly residues; that stretch reads QHGGFGSPGGMSR. Residues Arg690 and Arg692 each carry the asymmetric dimethylarginine; alternate modification. Omega-N-methylarginine; alternate occurs at positions 690 and 692. Position 692 is a symmetric dimethylarginine; alternate (Arg692). The region spanning 698 to 731 is the KOW 5 domain; the sequence is ELIGQTVRISQGPYKGYIGVVKDATESTARVELH. N6-acetyllysine is present on Lys712. Polar residues predominate over residues 741–801; it reads RQRLTTVDSQ…RTPHYGSQTP (61 aa). Residues 741–972 form a disordered region; sequence RQRLTTVDSQ…GSGIEQNSSD (232 aa). The stretch at 748–753 is one CTR1-1; approximate repeat; it reads DSQRPG. The 9 X 7 AA approximate tandem repeats of G-S-[QR]-T-P-X-[YQ], motif CTR1 stretch occupies residues 748-811; that stretch reads DSQRPGGMTS…LHDGSRTPAQ (64 aa). The CTR1-2 repeat unit spans residues 754–759; the sequence is GMTSTY. A CTR1-3 repeat occupies 760–765; sequence GRTPMY. The CTR1-4 repeat unit spans residues 766 to 772; the sequence is GSQTPMY. 2 positions are modified to phosphothreonine; by CDK9: Thr769 and Thr778. Residues 775-781 form a CTR1-5 repeat; sequence GSRTPMY. One copy of the CTR1-6 repeat lies at 782-788; sequence GSQTPLQ. Position 783 is a phosphoserine (Ser783). Residues Thr785 and Thr793 each carry the phosphothreonine modification. A CTR1-7 repeat occupies 790–796; sequence GSRTPHY. Residues 797 to 803 form a CTR1-8 repeat; that stretch reads GSQTPLH. Ser798 is modified (phosphoserine). Phosphothreonine occurs at positions 800 and 808. The CTR1-9 repeat unit spans residues 805 to 811; the sequence is GSRTPAQ. Residues 828–838 are compositionally biased toward acidic residues; it reads EEYEYAFDDEP. The stretch at 838–845 is one CTR2-1 repeat; sequence PTPSPQAY. The 10 X 8 AA approximate tandem repeats of P-[TS]-P-S-P-[QA]-[SG]-Y, motif CTR2 stretch occupies residues 838-944; sequence PTPSPQAYGG…ASPSPSPVGY (107 aa). The stretch at 848-856 is one CTR2-2; approximate repeat; sequence TPNPQTPGY. A compositionally biased stretch (pro residues) spans 851–860; it reads PQTPGYPDPS. Residues 857–863 form a CTR2-3; approximate repeat; the sequence is PDPSSPQ. Polar residues predominate over residues 861–884; sequence SPQVNPQYNPQTPGTPAMYNTDQF. The stretch at 875–879 is one CTR2-4; half-length repeat; sequence TPAMY. A CTR2-5; approximate repeat occupies 890–896; the sequence is PSPQGSY. Residues 890–905 are compositionally biased toward low complexity; that stretch reads PSPQGSYQPSPSPQSY. The CTR2-6 repeat unit spans residues 898–905; that stretch reads PSPSPQSY. A CTR2-7; approximate repeat occupies 910 to 915; the sequence is PSPAGY. Residues 918–924 form a CTR2-8 repeat; sequence THSPASY. The stretch at 926 to 933 is one CTR2-9 repeat; it reads PTPSPMAY. One copy of the CTR2-10 repeat lies at 937–944; it reads PSPSPVGY. Thr1028 carries the phosphothreonine modification. Lys1031 is covalently cross-linked (Glycyl lysine isopeptide (Lys-Gly) (interchain with G-Cter in SUMO2)).

It belongs to the SPT5 family. As to quaternary structure, interacts with SUPT4H1 to form DSIF. DSIF interacts with the positive transcription elongation factor b complex (P-TEFb complex), which is composed of CDK9 and cyclin-T (CCNT1 or CCNT2). DSIF interacts with RNA polymerase II, and this interaction is reduced by phosphorylation of the C-terminal domain (CTD) of POLR2A by P-TEFb. DSIF also interacts with the NELF complex, which is composed of NELFA, NELFB, NELFD and NELFE, and this interaction occurs following prior binding of DSIF to RNA polymerase II. Also interacts with PRMT1/HRMT1L2, HTATSF1/TATSF1, RNGTT/CAP1A, PRMT5/SKB1, SUPT6H, and can interact with PIN1. Component of a complex which is at least composed of HTATSF1/Tat-SF1, the P-TEFb complex components CDK9 and CCNT1, RNA polymerase II, SUPT5H, and NCL/nucleolin. Interacts with MCM3AP. Post-translationally, methylated by PRMT1/HRMT1L2 and PRMT5/SKB1. Methylation negatively regulates interaction with P-TEFb and RNA polymerase II. Phosphorylated by CDK7 and CDK9. Phosphorylation by P-TEFb (CDK9) at Thr residues of the C-terminal repeats alleviates transcriptional pausing and promotes transcription elongation. Dephosphorylated by the INTAC complex when transcripts are unfavorably configured for transcriptional elongation, leading to premature transcription termination: dephosphorylation is mediated by the PPP2CA component of the INTAC complex. Dephosphorylated by the PNUTS-PP1 complex in termination zones downstream of poly(A) sites, thereby promoting deceleration of RNA polymerase II transcription. Dephosphorylated by the PNUTS-PP1 complex in termination zones downstream of poly(A) sites, thereby promoting deceleration of RNA polymerase II transcription. Phosphorylation may also stimulate interaction with PIN1. Bulk phosphorylation occurs predominantly in mitosis. In terms of processing, ubiquitinated by UBR5 when not assembled in the DSIF complex, leading to its degradation: UBR5 recognizes and binds a degron that is not accessible when SUPT5H is part of the DSIF complex.

The protein localises to the nucleus. Component of the DRB sensitivity-inducing factor complex (DSIF complex), which regulates mRNA processing and transcription elongation by RNA polymerase II. DSIF positively regulates mRNA capping by stimulating the mRNA guanylyltransferase activity of RNGTT/CAP1A. DSIF also acts cooperatively with the negative elongation factor complex (NELF complex) to enhance transcriptional pausing at sites proximal to the promoter. Transcriptional pausing may facilitate the assembly of an elongation competent RNA polymerase II complex. DSIF and NELF promote pausing by inhibition of the transcription elongation factor TFIIS/S-II. TFIIS/S-II binds to RNA polymerase II at transcription pause sites and stimulates the weak intrinsic nuclease activity of the enzyme. Cleavage of blocked transcripts by RNA polymerase II promotes the resumption of transcription from the new 3' terminus and may allow repeated attempts at transcription through natural pause sites. Following phosphorylation by CDK9, DSIF can also positively regulate transcriptional elongation. The sequence is that of Transcription elongation factor SPT5 (Supt5h) from Mus musculus (Mouse).